The primary structure comprises 258 residues: Transcription factor RSL3 (258 aa).

The D-box motif lies at 98-105 (RKLLDVEN). The segment at 119–178 (ELAKSKKKQRVSSESNTVDESNTNWVDGQSLSNSSDDEKASVTSVKGKTRATKGTATDPQ) is disordered. The span at 130–152 (SSESNTVDESNTNWVDGQSLSNS) shows a compositional bias: polar residues. The tract at residues 173 to 186 (TATDPQSLYARKRR) is basic motif. Residues 173 to 222 (TATDPQSLYARKRREKINERLKTLQNLVPNGTKVDISTMLEEAVHYVKFL) enclose the bHLH domain. The interval 187–222 (EKINERLKTLQNLVPNGTKVDISTMLEEAVHYVKFL) is helix-loop-helix motif.

Homodimer. Post-translationally, ubiquitinated. Ubiquitination leads to its subsequent degradation by the 26S proteasome. In terms of tissue distribution, expressed constitutively in roots, leaves, and flowers. Expressed in root epidermal hair cells.

It localises to the nucleus. Its function is as follows. Transcription factor involved in the regulation of root hair elongation. Is sufficient to promote postmitotic cell growth in root-hair cells and is a direct transcriptional target of RHD6 and RSL1. Involved in the regulation of root hair elongation in response to low phosphate. Controls root hair cell growth by regulating the expression of genes encoding proteins involved in cell signaling, cell wall modification and secretion. This chain is Transcription factor RSL3, found in Arabidopsis thaliana (Mouse-ear cress).